The chain runs to 133 residues: Cytidine deaminase (133 aa).

A CMP/dCMP-type deaminase domain is found at V3–Y131. N43–E45 is a binding site for substrate. C54 is a Zn(2+) binding site. E56 functions as the Proton donor in the catalytic mechanism. Zn(2+) contacts are provided by C89 and C92.

This sequence belongs to the cytidine and deoxycytidylate deaminase family. Homodimer. It depends on Zn(2+) as a cofactor.

It carries out the reaction cytidine + H2O + H(+) = uridine + NH4(+). The enzyme catalyses 2'-deoxycytidine + H2O + H(+) = 2'-deoxyuridine + NH4(+). Its function is as follows. This enzyme scavenges exogenous and endogenous cytidine and 2'-deoxycytidine for UMP synthesis. In Mycoplasma pneumoniae (strain ATCC 29342 / M129 / Subtype 1) (Mycoplasmoides pneumoniae), this protein is Cytidine deaminase (cdd).